The following is a 266-amino-acid chain: Glucosamine-6-phosphate deaminase (266 aa).

The active-site Proton acceptor; for enolization step is Asp72. The active-site For ring-opening step is Asp141. The active-site Proton acceptor; for ring-opening step is the His143. Glu148 acts as the For ring-opening step in catalysis.

It belongs to the glucosamine/galactosamine-6-phosphate isomerase family. NagB subfamily. Homohexamer; trimer of disulfide-linked dimers.

It catalyses the reaction alpha-D-glucosamine 6-phosphate + H2O = beta-D-fructose 6-phosphate + NH4(+). The protein operates within amino-sugar metabolism; N-acetylneuraminate degradation; D-fructose 6-phosphate from N-acetylneuraminate: step 5/5. With respect to regulation, allosterically activated by N-acetylglucosamine 6-phosphate (GlcNAc6P). Its function is as follows. Catalyzes the reversible isomerization-deamination of glucosamine 6-phosphate (GlcN6P) to form fructose 6-phosphate (Fru6P) and ammonium ion. In Vibrio parahaemolyticus serotype O3:K6 (strain RIMD 2210633), this protein is Glucosamine-6-phosphate deaminase.